The primary structure comprises 950 residues: MORC family CW-type zinc finger protein 1 (950 aa).

A coiled-coil region spans residues 281 to 342 (KGKFKTEVQK…TKHKSLRQKQ (62 aa)). A CW-type zinc finger spans residues 465–530 (SLESLQWRRR…SCNQIERLPS (66 aa)). Residues Cys485, Cys488, Cys511, and Cys522 each coordinate Zn(2+). Disordered regions lie at residues 532 to 551 (PLGT…RQLQ) and 679 to 700 (KKQQ…ASSR). The span at 541-550 (PSKDERERQL) shows a compositional bias: basic and acidic residues. Residues 885-916 (LGQCELKRKRTEEKLSDLRAKLALLLQKLQLG) adopt a coiled-coil conformation.

As to expression, expressed at very low level in male germ cells.

The protein localises to the nucleus. Its function is as follows. Required for spermatogenesis. Essential for de novo DNA methylation and silencing of transposable elements in the male embryonic germ cells. Not required for piRNA biosynthesis. The protein is MORC family CW-type zinc finger protein 1 of Mus musculus (Mouse).